The primary structure comprises 212 residues: Ras-related protein Rab-17 (212 aa).

Serine 29 carries the phosphoserine modification. GTP contacts are provided by glycine 31, lysine 32, serine 33, and threonine 50. 3 residues coordinate Mg(2+): serine 33, threonine 50, and aspartate 73. A Switch 1 motif is present at residues 43 to 54 (DFKSILPTVGCA). The Switch 2 signature appears at 75–91 (AGQEKYHSVCHLYFRGA). The GTP site is built by glycine 76, asparagine 132, lysine 133, aspartate 135, and alanine 163. Residues cysteine 209 and cysteine 210 are each lipidated (S-geranylgeranyl cysteine).

Belongs to the small GTPase superfamily. Rab family. It depends on Mg(2+) as a cofactor. Expressed in melanocytes (at protein level).

It is found in the recycling endosome membrane. It localises to the melanosome. The protein resides in the cell projection. The protein localises to the dendrite. The enzyme catalyses GTP + H2O = GDP + phosphate + H(+). Regulated by guanine nucleotide exchange factors (GEFs) which promote the exchange of bound GDP for free GTP. Regulated by GTPase activating proteins (GAPs) which increase the GTP hydrolysis activity. Inhibited by GDP dissociation inhibitors (GDIs). Functionally, the small GTPases Rab are key regulators of intracellular membrane trafficking, from the formation of transport vesicles to their fusion with membranes. Rabs cycle between an inactive GDP-bound form and an active GTP-bound form that is able to recruit to membranes different set of downstream effectors directly responsible for vesicle formation, movement, tethering and fusion. RAB17 is involved in transcytosis, the directed movement of endocytosed material through the cell and its exocytosis from the plasma membrane at the opposite side. Mainly observed in epithelial cells, transcytosis mediates for instance, the transcellular transport of immunoglobulins from the basolateral surface to the apical surface. Most probably controls membrane trafficking through apical recycling endosomes in a post-endocytic step of transcytosis. Required for melanosome transport and release from melanocytes, it also regulates dendrite and dendritic spine development. May also play a role in cell migration. The polypeptide is Ras-related protein Rab-17 (Homo sapiens (Human)).